The following is a 307-amino-acid chain: tRNA dimethylallyltransferase (307 aa).

Residue 9-16 (GPTAVGKT) participates in ATP binding. 11 to 16 (TAVGKT) contributes to the substrate binding site. An interaction with substrate tRNA region spans residues 34 to 37 (DSMQ).

This sequence belongs to the IPP transferase family. As to quaternary structure, monomer. Requires Mg(2+) as cofactor.

It catalyses the reaction adenosine(37) in tRNA + dimethylallyl diphosphate = N(6)-dimethylallyladenosine(37) in tRNA + diphosphate. Catalyzes the transfer of a dimethylallyl group onto the adenine at position 37 in tRNAs that read codons beginning with uridine, leading to the formation of N6-(dimethylallyl)adenosine (i(6)A). This Levilactobacillus brevis (strain ATCC 367 / BCRC 12310 / CIP 105137 / JCM 1170 / LMG 11437 / NCIMB 947 / NCTC 947) (Lactobacillus brevis) protein is tRNA dimethylallyltransferase.